Here is a 421-residue protein sequence, read N- to C-terminus: Glutamyl-tRNA reductase (421 aa).

Substrate contacts are provided by residues 49–52, Ser109, 114–116, and Gln120; these read TCNR and EPQ. The active-site Nucleophile is the Cys50. 189–194 serves as a coordination point for NADP(+); the sequence is GAGKMS.

This sequence belongs to the glutamyl-tRNA reductase family. As to quaternary structure, homodimer.

The catalysed reaction is (S)-4-amino-5-oxopentanoate + tRNA(Glu) + NADP(+) = L-glutamyl-tRNA(Glu) + NADPH + H(+). The protein operates within porphyrin-containing compound metabolism; protoporphyrin-IX biosynthesis; 5-aminolevulinate from L-glutamyl-tRNA(Glu): step 1/2. In terms of biological role, catalyzes the NADPH-dependent reduction of glutamyl-tRNA(Glu) to glutamate 1-semialdehyde (GSA). This is Glutamyl-tRNA reductase from Solibacter usitatus (strain Ellin6076).